A 397-amino-acid polypeptide reads, in one-letter code: S-adenosylmethionine synthase (397 aa).

Position 16 (H16) interacts with ATP. Residue D18 participates in Mg(2+) binding. E44 serves as a coordination point for K(+). L-methionine-binding residues include E57 and Q100. The segment at 100–110 (QSPDIAQGVDN) is flexible loop. Residues 175 to 177 (DGK), 242 to 243 (RF), D251, 257 to 258 (RK), A274, and K278 contribute to the ATP site. Position 251 (D251) interacts with L-methionine. K282 is a binding site for L-methionine.

It belongs to the AdoMet synthase family. Homotetramer; dimer of dimers. Requires Mg(2+) as cofactor. The cofactor is K(+).

It is found in the cytoplasm. The enzyme catalyses L-methionine + ATP + H2O = S-adenosyl-L-methionine + phosphate + diphosphate. It functions in the pathway amino-acid biosynthesis; S-adenosyl-L-methionine biosynthesis; S-adenosyl-L-methionine from L-methionine: step 1/1. Catalyzes the formation of S-adenosylmethionine (AdoMet) from methionine and ATP. The overall synthetic reaction is composed of two sequential steps, AdoMet formation and the subsequent tripolyphosphate hydrolysis which occurs prior to release of AdoMet from the enzyme. This chain is S-adenosylmethionine synthase, found in Leifsonia xyli subsp. xyli (strain CTCB07).